The primary structure comprises 105 residues: Large ribosomal subunit protein uL24 (105 aa).

It belongs to the universal ribosomal protein uL24 family. Part of the 50S ribosomal subunit.

Its function is as follows. One of two assembly initiator proteins, it binds directly to the 5'-end of the 23S rRNA, where it nucleates assembly of the 50S subunit. One of the proteins that surrounds the polypeptide exit tunnel on the outside of the subunit. The polypeptide is Large ribosomal subunit protein uL24 (Chromohalobacter salexigens (strain ATCC BAA-138 / DSM 3043 / CIP 106854 / NCIMB 13768 / 1H11)).